The sequence spans 321 residues: Porin Omp2a (321 aa).

An N-terminal signal peptide occupies residues 1-22; the sequence is MNIKSLLLGSAAALVAASGAQA.

Belongs to the alphaproteobacteria porin family. In terms of assembly, monomer.

It localises to the cell outer membrane. Forms passive diffusion pores that allow small molecular weight hydrophilic materials across the outer membrane. This chain is Porin Omp2a (omp2a), found in Brucella abortus (strain S19).